The following is a 156-amino-acid chain: Ribosomal RNA large subunit methyltransferase H (156 aa).

S-adenosyl-L-methionine is bound by residues Leu-73, Gly-104, and 123-128 (LSALTL).

It belongs to the RNA methyltransferase RlmH family. As to quaternary structure, homodimer.

Its subcellular location is the cytoplasm. It catalyses the reaction pseudouridine(1915) in 23S rRNA + S-adenosyl-L-methionine = N(3)-methylpseudouridine(1915) in 23S rRNA + S-adenosyl-L-homocysteine + H(+). Functionally, specifically methylates the pseudouridine at position 1915 (m3Psi1915) in 23S rRNA. The chain is Ribosomal RNA large subunit methyltransferase H from Vibrio vulnificus (strain CMCP6).